A 390-amino-acid chain; its full sequence is MPDLKTMMLNFGPQHPAAHGVLRLVLEMDGEVIERADPHIGLLHRGTEKLIEHKTYLQALPYFDRLDYVSPMSQEHAYSLCVEKLLQCEIPIRAKYLRVLFCELTRILNHLLNISSQALDVGAMTPLLWLFEEREKILEFYERASGARFHAAYIRPGGLAADIPEGLIEDIAKFIEQFPKYIDDVDELLTENRIWKQRTVGISEISIKQALDWGFSGPMLRAAGLAWDLRKSQPYEIYDQLDFDIPIGQNGDCYDRYLVRMAEIRQSVSLVKQCIEKMPEGPIKTEDRKISPPPRAEMKESMEAMIHHFKLYSEGYHVPEGEAYVAVEAPKGEFGVYIVSDGTNRPYRCRIRAPGFAHLQALDFMAKGHMLADIAAIIGSLDIVFGEIDR.

It belongs to the complex I 49 kDa subunit family. As to quaternary structure, NDH-1 is composed of 14 different subunits. Subunits NuoB, C, D, E, F, and G constitute the peripheral sector of the complex.

The protein localises to the cell membrane. The catalysed reaction is a quinone + NADH + 5 H(+)(in) = a quinol + NAD(+) + 4 H(+)(out). NDH-1 shuttles electrons from NADH, via FMN and iron-sulfur (Fe-S) centers, to quinones in the respiratory chain. The immediate electron acceptor for the enzyme in this species is believed to be ubiquinone. Couples the redox reaction to proton translocation (for every two electrons transferred, four hydrogen ions are translocated across the cytoplasmic membrane), and thus conserves the redox energy in a proton gradient. The sequence is that of NADH-quinone oxidoreductase subunit D from Wolbachia pipientis subsp. Culex pipiens (strain wPip).